A 406-amino-acid chain; its full sequence is 3-oxoacyl-[acyl-carrier-protein] synthase 1 (406 aa).

The region spanning 1–405 (MRRVVITGIG…GTNVSLIVKK (405 aa)) is the Ketosynthase family 3 (KS3) domain. Active-site for beta-ketoacyl synthase activity residues include Cys-164, His-299, and His-335.

This sequence belongs to the thiolase-like superfamily. Beta-ketoacyl-ACP synthases family. In terms of assembly, homodimer.

It localises to the cytoplasm. It carries out the reaction a fatty acyl-[ACP] + malonyl-[ACP] + H(+) = a 3-oxoacyl-[ACP] + holo-[ACP] + CO2. The enzyme catalyses (3Z)-decenoyl-[ACP] + malonyl-[ACP] + H(+) = 3-oxo-(5Z)-dodecenoyl-[ACP] + holo-[ACP] + CO2. It participates in lipid metabolism; fatty acid biosynthesis. In terms of biological role, involved in the type II fatty acid elongation cycle. Catalyzes the elongation of a wide range of acyl-ACP by the addition of two carbons from malonyl-ACP to an acyl acceptor. Can also use unsaturated fatty acids. Catalyzes a key reaction in unsaturated fatty acid (UFA) synthesis, the elongation of the cis-3-decenoyl-ACP produced by FabA. The sequence is that of 3-oxoacyl-[acyl-carrier-protein] synthase 1 (fabB) from Buchnera aphidicola subsp. Acyrthosiphon pisum (strain APS) (Acyrthosiphon pisum symbiotic bacterium).